Consider the following 622-residue polypeptide: MKIEGKVSEHESINMMYERVSKEGVTNIVDRFNAQEKGRCPFCEKGLSCQLCSMGPCRISKDKPTGACGIDAAGMVVRNFTHKNMLGTEAYTYHAIEAAKTLKATAEGKTIYEIKDVEKLKWFAKLLGIEGEDVNELAAKVADFVISDLSSLEKSRLVEIFAPEKRKELWEKLGIFPSGVFQELLTMGSSAMTNVDSNYVSLAKKSMSMSIATCMAAQIALETIQDILFGTPMPHESHSDLGILDPEYVNIAVNGHEPFVGIALIKLAEREEIQEKARKAGAKGLRIIGFIETGQEILQRVDSPVFAGIVGNWIVQEYALATGCVDVFAADMNCTLPSLPEYQRYGVKIVPVSRLVRLKGIDEGLDYEPEKAEEIAMKLIDMAIENFKQRDKSKAVKVEQKKKIVVGFSPEAILKALNGDLNVLLDAIKKGDIKGVVALVSCTTLKNGPHDSSTVTIAKELIKRDILVLSMGCGNAALQVAGLTSMEAVELAGEKLKAVCKALNIPPVLSFGTCTDTGRAAYLVRLIADALGVDVPQLPVAVTAPEYMEQKATIDAVFAVAYGLTTHVSPVPPITGSEDAVKLFTEDVEKLTGGKVVVEEDPLKAAELLEKVIEEKRKALGI.

[4Fe-4S] cluster-binding residues include Cys40, Cys49, Cys52, Cys57, and Cys68. His256, Cys334, Cys442, Cys473, and Cys514 together coordinate [Ni-4Fe-5S] cluster.

The protein belongs to the Ni-containing carbon monoxide dehydrogenase family. In terms of assembly, homodimer. It depends on [4Fe-4S] cluster as a cofactor. Requires [Ni-4Fe-5S] cluster as cofactor.

It carries out the reaction CO + 2 oxidized [2Fe-2S]-[ferredoxin] + H2O = 2 reduced [2Fe-2S]-[ferredoxin] + CO2 + 2 H(+). In terms of biological role, CODH oxidizes carbon monoxide coupled, via CooF, to the reduction of a hydrogen cation by a hydrogenase (possibly CooH). This is Carbon monoxide dehydrogenase (cooS) from Archaeoglobus fulgidus (strain ATCC 49558 / DSM 4304 / JCM 9628 / NBRC 100126 / VC-16).